Reading from the N-terminus, the 449-residue chain is UDP-N-acetylmuramoylalanine--D-glutamate ligase (449 aa).

118–124 (GTNGKTT) contacts ATP.

Belongs to the MurCDEF family.

Its subcellular location is the cytoplasm. It catalyses the reaction UDP-N-acetyl-alpha-D-muramoyl-L-alanine + D-glutamate + ATP = UDP-N-acetyl-alpha-D-muramoyl-L-alanyl-D-glutamate + ADP + phosphate + H(+). It participates in cell wall biogenesis; peptidoglycan biosynthesis. Functionally, cell wall formation. Catalyzes the addition of glutamate to the nucleotide precursor UDP-N-acetylmuramoyl-L-alanine (UMA). The sequence is that of UDP-N-acetylmuramoylalanine--D-glutamate ligase from Staphylococcus haemolyticus (strain JCSC1435).